A 111-amino-acid polypeptide reads, in one-letter code: Cell division protein FtsB (111 aa).

Residues methionine 1–lysine 3 lie on the Cytoplasmic side of the membrane. Residues leucine 4–leucine 21 form a helical membrane-spanning segment. Residues glycine 22 to arginine 111 lie on the Periplasmic side of the membrane. The stretch at lysine 33–glycine 63 forms a coiled coil. A disordered region spans residues glutamate 90–arginine 111. The span at asparagine 95 to arginine 111 shows a compositional bias: low complexity.

This sequence belongs to the FtsB family. Part of a complex composed of FtsB, FtsL and FtsQ.

The protein localises to the cell inner membrane. Functionally, essential cell division protein. May link together the upstream cell division proteins, which are predominantly cytoplasmic, with the downstream cell division proteins, which are predominantly periplasmic. In Pectobacterium carotovorum subsp. carotovorum (strain PC1), this protein is Cell division protein FtsB.